The primary structure comprises 356 residues: tRNA-specific 2-thiouridylase MnmA 1 (356 aa).

Residues 8–15 (GMSGGVDS) and M34 contribute to the ATP site. The Nucleophile role is filled by C103. A disulfide bridge links C103 with C199. G127 lines the ATP pocket. An interaction with tRNA region spans residues 149–151 (KDQ). The active-site Cysteine persulfide intermediate is C199. The segment at 305–306 (RY) is interaction with tRNA.

The protein belongs to the MnmA/TRMU family.

Its subcellular location is the cytoplasm. The enzyme catalyses S-sulfanyl-L-cysteinyl-[protein] + uridine(34) in tRNA + AH2 + ATP = 2-thiouridine(34) in tRNA + L-cysteinyl-[protein] + A + AMP + diphosphate + H(+). In terms of biological role, catalyzes the 2-thiolation of uridine at the wobble position (U34) of tRNA, leading to the formation of s(2)U34. This chain is tRNA-specific 2-thiouridylase MnmA 1, found in Clostridium botulinum (strain Langeland / NCTC 10281 / Type F).